The chain runs to 983 residues: UPF0182 protein KRH_08700 (983 aa).

Transmembrane regions (helical) follow at residues 22–42 (GALL…VGFT), 67–87 (VIGL…LSLW), 116–136 (VVMV…VATQ), 172–192 (LLIG…LLMH), 213–233 (VHLG…FWLD), 261–281 (GILA…GFIG), and 288–308 (IGAA…PWAI). The tract at residues 893–959 (GAKTDTGAGV…DKAMKDGDWT (67 aa)) is disordered. A compositionally biased stretch (basic and acidic residues) spans 947–959 (QDSDKAMKDGDWT).

Belongs to the UPF0182 family.

The protein localises to the cell membrane. In Kocuria rhizophila (strain ATCC 9341 / DSM 348 / NBRC 103217 / DC2201), this protein is UPF0182 protein KRH_08700.